The sequence spans 346 residues: (R,R)-butanediol dehydrogenase (346 aa).

Zn(2+) is bound by residues Cys37, His70, and Glu152.

Belongs to the zinc-containing alcohol dehydrogenase family. In terms of assembly, homotetramer. Interacts with BrxC. Requires Zn(2+) as cofactor.

The protein localises to the cytoplasm. It localises to the secreted. The enzyme catalyses (R,R)-butane-2,3-diol + NAD(+) = (R)-acetoin + NADH + H(+). This Bacillus subtilis (strain 168) protein is (R,R)-butanediol dehydrogenase.